Here is a 293-residue protein sequence, read N- to C-terminus: Movement protein BC1 (293 aa).

It belongs to the begomovirus movement protein BC1 family. In terms of assembly, binds to dimeric supercoiled plasmid DNA. Phosphorylated.

It is found in the host cell membrane. The protein localises to the host microsome membrane. It localises to the host endoplasmic reticulum membrane. Its function is as follows. Transports viral genome to neighboring plant cells directly through plasmosdesmata, without any budding. The movement protein allows efficient cell to cell propagation, by bypassing the host cell wall barrier. Begomovirus genome is shuttled out of nucleus by Nuclear shuttle protein (NSP) and the movement protein transports the DNA-NSP complex to cell plasmodesmata and facilitates further movement across the cell wall. The protein is Movement protein BC1 of Macroptilium lathyroides (Lima bean).